The chain runs to 248 residues: Flagellar L-ring protein (248 aa).

The N-terminal stretch at 1 to 23 is a signal peptide; it reads MRHAFRHSVRTLGLLGLLPVLSA. A lipid anchor (N-palmitoyl cysteine) is attached at Cys-24. A lipid anchor (S-diacylglycerol cysteine) is attached at Cys-24.

Belongs to the FlgH family. As to quaternary structure, the basal body constitutes a major portion of the flagellar organelle and consists of four rings (L,P,S, and M) mounted on a central rod.

The protein localises to the cell outer membrane. Its subcellular location is the bacterial flagellum basal body. In terms of biological role, assembles around the rod to form the L-ring and probably protects the motor/basal body from shearing forces during rotation. This chain is Flagellar L-ring protein, found in Gluconobacter oxydans (strain 621H) (Gluconobacter suboxydans).